A 382-amino-acid polypeptide reads, in one-letter code: E3 ubiquitin-protein ligase RNF133 (382 aa).

The PA domain occupies 65–167; that stretch reads SSILKRVAGV…IKGMEILHLI (103 aa). Residues 190-210 form a helical membrane-spanning segment; sequence YFVSFMIVTTATLAYFTFYHI. The RING-type; atypical zinc finger occupies 256–297; that stretch reads CVICFEAYKPNEIVRILTCKHFFHKNCIDPWILAHGTCPMCK. Residues 328 to 382 are disordered; sequence TLSPVEEETNYELPPARTSSKVTHVQEHPTSSANAGSQPPEAEETSHPSHGQQVL. Polar residues predominate over residues 344–364; the sequence is RTSSKVTHVQEHPTSSANAGS.

Interacts with E3 ligase UBE2J1. In terms of processing, auto-ubiquitinated. In terms of tissue distribution, expression is testis-specific.

The protein localises to the endoplasmic reticulum membrane. It carries out the reaction S-ubiquitinyl-[E2 ubiquitin-conjugating enzyme]-L-cysteine + [acceptor protein]-L-lysine = [E2 ubiquitin-conjugating enzyme]-L-cysteine + N(6)-ubiquitinyl-[acceptor protein]-L-lysine.. The protein operates within protein modification; protein ubiquitination. Its function is as follows. Has E3 ubiquitin-protein ligase activity. Plays a role in male fecundity through the interaction with the E2 ubituitin-protein ligase UBE2J1. In Mus musculus (Mouse), this protein is E3 ubiquitin-protein ligase RNF133 (Rnf133).